Consider the following 348-residue polypeptide: Phospho-2-dehydro-3-deoxyheptonate aldolase, Trp-sensitive (348 aa).

It belongs to the class-I DAHP synthase family.

The catalysed reaction is D-erythrose 4-phosphate + phosphoenolpyruvate + H2O = 7-phospho-2-dehydro-3-deoxy-D-arabino-heptonate + phosphate. The protein operates within metabolic intermediate biosynthesis; chorismate biosynthesis; chorismate from D-erythrose 4-phosphate and phosphoenolpyruvate: step 1/7. Its function is as follows. Stereospecific condensation of phosphoenolpyruvate (PEP) and D-erythrose-4-phosphate (E4P) giving rise to 3-deoxy-D-arabino-heptulosonate-7-phosphate (DAHP). The polypeptide is Phospho-2-dehydro-3-deoxyheptonate aldolase, Trp-sensitive (aroH) (Escherichia coli O6:H1 (strain CFT073 / ATCC 700928 / UPEC)).